Consider the following 741-residue polypeptide: uncharacterized protein (741 aa).

Positions 64-103 form a coiled coil; it reads VETLLCMLEQLTIRIEFLTKEIAQQEAAYKDIQNTQKSLV. A compositionally biased stretch (polar residues) spans 137–155; it reads FERQNRTAPLQSKVTTASL. 3 disordered regions span residues 137 to 214, 280 to 318, and 330 to 364; these read FERQ…TGLP, RTYSSISSSSSPFKKKTQSHLPNRTTEVPSISKQLSKSS, and SVSSVTKSPSPTPQSAPRAQSASTETAQDLDFLTP. 2 stretches are compositionally biased toward low complexity: residues 161-173 and 197-209; these read RTSMSSSPTASRT and KSKSVLPPSKSLA. Positions 298–308 are enriched in polar residues; the sequence is SHLPNRTTEVP. Low complexity-rich tracts occupy residues 309 to 318 and 330 to 344; these read SISKQLSKSS and SVSSVTKSPSPTPQS. The segment covering 346–356 has biased composition (polar residues); that stretch reads PRAQSASTETA. ATP is bound at residue 499–506; that stretch reads GPPGTGKT.

It belongs to the AAA ATPase family.

Its subcellular location is the cytoplasm. It is found in the nucleus. This is an uncharacterized protein from Schizosaccharomyces pombe (strain 972 / ATCC 24843) (Fission yeast).